Here is a 445-residue protein sequence, read N- to C-terminus: Exodeoxyribonuclease 7 large subunit (445 aa).

Belongs to the XseA family. In terms of assembly, heterooligomer composed of large and small subunits.

The protein localises to the cytoplasm. The enzyme catalyses Exonucleolytic cleavage in either 5'- to 3'- or 3'- to 5'-direction to yield nucleoside 5'-phosphates.. Its function is as follows. Bidirectionally degrades single-stranded DNA into large acid-insoluble oligonucleotides, which are then degraded further into small acid-soluble oligonucleotides. The chain is Exodeoxyribonuclease 7 large subunit from Staphylococcus epidermidis (strain ATCC 35984 / DSM 28319 / BCRC 17069 / CCUG 31568 / BM 3577 / RP62A).